A 292-amino-acid polypeptide reads, in one-letter code: 11-beta-hydroxysteroid dehydrogenase 1 (292 aa).

At 1 to 7 (MAFMKKY) the chain is on the cytoplasmic side. The chain crosses the membrane as a helical; Signal-anchor for type II membrane protein span at residues 8 to 24 (LLPILGIFLAYYYYSAN). Residues 25–292 (EEFRPEMLRG…KYNMERFINN (268 aa)) lie on the Lumenal side of the membrane. NADP(+) is bound by residues 41–67 (GASKGIGREMAYHLARMGAHVVVTARS) and 92–93 (TM). N95 carries an N-linked (GlcNAc...) asparagine glycan. 119–121 (NHI) provides a ligand contact to NADP(+). Residue S170 coordinates substrate. The Proton acceptor role is filled by Y183. Position 183-187 (183-187 (YSASK)) interacts with NADP(+). N207 is a glycosylation site (N-linked (GlcNAc...) asparagine). NADP(+)-binding positions include 216–222 (GLIDTDT) and 218–222 (IDTDT).

Belongs to the short-chain dehydrogenases/reductases (SDR) family. As to quaternary structure, homodimer. As to expression, liver, kidney, lung, hypothalamus, anterior pituitary and placenta.

It localises to the endoplasmic reticulum membrane. The enzyme catalyses an 11beta-hydroxysteroid + NADP(+) = an 11-oxosteroid + NADPH + H(+). The catalysed reaction is corticosterone + NADP(+) = 11-dehydrocorticosterone + NADPH + H(+). It carries out the reaction cortisone + NADPH + H(+) = cortisol + NADP(+). It catalyses the reaction a 7beta-hydroxysteroid + NADP(+) = a 7-oxosteroid + NADPH + H(+). The enzyme catalyses 7-oxocholesterol + NADPH + H(+) = 7beta-hydroxycholesterol + NADP(+). The catalysed reaction is chenodeoxycholate + NADP(+) = 7-oxolithocholate + NADPH + H(+). It carries out the reaction 7-oxolithocholate + NADPH + H(+) = ursodeoxycholate + NADP(+). It catalyses the reaction glycochenodeoxycholate + NADP(+) = 7-oxoglycolithocholate + NADPH + H(+). The enzyme catalyses taurochenodeoxycholate + NADP(+) = 7-oxotaurolithocholate + NADPH + H(+). The catalysed reaction is tauroursodeoxycholate + NADP(+) = 7-oxotaurolithocholate + NADPH + H(+). It carries out the reaction glycoursodeoxycholate + NADP(+) = 7-oxoglycolithocholate + NADPH + H(+). It catalyses the reaction 7-oxopregnenolone + NADPH + H(+) = 7beta-hydroxypregnenolone + NADP(+). The enzyme catalyses 3beta,7alpha-dihydroxyandrost-5-en-17-one + NADP(+) = 3beta-hydroxy-5-androstene-7,17-dione + NADPH + H(+). The catalysed reaction is 3beta-hydroxy-5-androstene-7,17-dione + NADPH + H(+) = 3beta,7beta-dihydroxyandrost-5-en-17-one + NADP(+). It carries out the reaction 3beta-hydroxy-5alpha-androstane-7,17-dione + NADPH + H(+) = 3beta,7beta-dihydroxy-5alpha-androstan-17-one + NADP(+). Controls the reversible conversion of biologically active glucocorticoids such as cortisone to cortisol, and 11-dehydrocorticosterone to corticosterone in the presence of NADP(H). Participates in the corticosteroid receptor-mediated anti-inflammatory response, as well as metabolic and homeostatic processes. Plays a role in the secretion of aqueous humor in the eye, maintaining a normotensive, intraocular environment. Bidirectional in vitro, predominantly functions as a reductase in vivo, thereby increasing the concentration of active glucocorticoids. It has broad substrate specificity, besides glucocorticoids, it accepts other steroid and sterol substrates. Interconverts 7-oxo- and 7-hydroxy-neurosteroids such as 7-oxopregnenolone and 7beta-hydroxypregnenolone, 7-oxodehydroepiandrosterone (3beta-hydroxy-5-androstene-7,17-dione) and 7beta-hydroxydehydroepiandrosterone (3beta,7beta-dihydroxyandrost-5-en-17-one), among others. Catalyzes the stereo-specific conversion of the major dietary oxysterol, 7-ketocholesterol (7-oxocholesterol), into the more polar 7-beta-hydroxycholesterol metabolite. 7-oxocholesterol is one of the most important oxysterols, it participates in several events such as induction of apoptosis, accumulation in atherosclerotic lesions, lipid peroxidation, and induction of foam cell formation. Mediates the 7-oxo reduction of 7-oxolithocholate mainly to chenodeoxycholate, and to a lesser extent to ursodeoxycholate, both in its free form and when conjugated to glycine or taurine, providing a link between glucocorticoid activation and bile acid metabolism. Catalyzes the synthesis of 7-beta-25-dihydroxycholesterol from 7-oxo-25-hydroxycholesterol in vitro, which acts as a ligand for the G-protein-coupled receptor (GPCR) Epstein-Barr virus-induced gene 2 (EBI2) and may thereby regulate immune cell migration. In Ovis aries (Sheep), this protein is 11-beta-hydroxysteroid dehydrogenase 1 (HSD11B1).